We begin with the raw amino-acid sequence, 387 residues long: Chromatin modification-related protein EAF3 (387 aa).

The tract at residues asparagine 52–leucine 96 is disordered. Over residues serine 76–valine 92 the composition is skewed to basic and acidic residues. One can recognise a Tudor-knot domain in the interval asparagine 100 to valine 126. Residues proline 159–leucine 197 are disordered. Positions lysine 211–lysine 385 constitute an MRG domain.

It belongs to the MRG family. In terms of assembly, component of the NuA4 histone acetyltransferase complex.

Its subcellular location is the nucleus. Its function is as follows. Involved in deacetylation of histones, chromatin assembly and chromosome segregation. May act as a transcriptional oscillator, directing histone deacetylases to specific chromosomal domains. Component of the NuA4 histone acetyltransferase complex which is involved in transcriptional activation of selected genes principally by acetylation of nucleosomal histone H4 and H2A. The NuA4 complex is also involved in DNA repair. This chain is Chromatin modification-related protein EAF3 (EAF3), found in Yarrowia lipolytica (strain CLIB 122 / E 150) (Yeast).